The chain runs to 1225 residues: MVDVNRFKSMQITLASPSKVRSWSYGEVKKPETINYRTLKPEREGLFDEVIFGPTKDWECACGKYKRIRYRGIVCDRCGVEVTRTKVRRERMGHIELKAPVSHIWYFKGIPSRMGLTLDMSPRALEEVIYFAAYVVIDPKDTPLEHKSIMTEREYRERLREYGYGSFVAKMGAEAIQDLLKQVDLEKEIAELKEELKTATGQKRVKAIRRLDVLDAFYKSGNKPEWMILNILPVIPPDLRPMLQLDGGRFASSDLNDLYRRVINRNNRLARLLELNAPGIIVQNEKRMLQEAVDALIDNGRRGRPITGPGSRPLKSLSHMLKGKQGRFRQNLLGKRVDFSGRSVIAVGPTLKMYQCGVPREMAIELFKPFVMREIVARDIVQNVKAAKRLVERGDERIWDILEEVIKEHPVLLNRAPTLHRLGIQAFEPVLIDGKALRLHPLVCEAYNADFDGDQMAIHVPLSEEAQAEARILMLAAEHILNPKDGKPVVTPSQDMVLGNYYLTMEEAGREGEGMVFKDRDEAVMAYRNGYVHLHSRVGIATDSLNKPWTEEQRHKVLLTTVGKILFNDIMPEGLPYLQEPNNANLTEGVPAKYFLPLGGAIKEAISNLELNPPFKKKNLGNIIAEIFKRFRTTETSALLDRMKNLGYHHSTLAGLTVGIADIPVVDDKAEIIEESHKRVEQITKQFRRGMITDDERYNAVTAEWRAAREKLEKRLIANQDPKNPIVMMMDSGARGNISNFSQLAGMRGLMAAPNGRIMELPILSNFREGLSVLEMFFSTHGARKGMTDTALKTADSGYLTRRLVDVAQDVIIREDDCGTDRGLLIRSIAEGKEMIESLEERLNGRYTKKTVKHPETGAVIIGPNELITEDKAREIVNAGVEEVTIRSVFTCNTRHGVCRHCYGINLATGDAVEVGEAVGTIAAQSIGEPGTQLTMRTFHTGGVASNTDITQGLPRVQEIFEARNPKGEAVITEVKGQVTAIEEDASTRTKKVFVKGETGEGEYVVPFTARMRVEVGGQVARGAALTEGSIQPKRLLAVRDVLSVETYLLGEVQKVYRSQGVEIGDKHIEVMVRQMIRKVRVMDPGDTDLLMGTLMDINDFTDANKDVLIAGGVPATGRPVLMGITKASLETNSFLSAASFQETTRVLTDAAIRGKKDHLLGLKENVIIGKIIPAGTGMARYRNLEPHAVNEEEYLNPPVEEEGNEETTEVVVDTAVETVEETVE.

Positions 60, 62, 75, and 78 each coordinate Zn(2+). Mg(2+) is bound by residues aspartate 450, aspartate 452, and aspartate 454. Residues cysteine 818, cysteine 892, cysteine 899, and cysteine 902 each coordinate Zn(2+).

It belongs to the RNA polymerase beta' chain family. The RNAP catalytic core consists of 2 alpha, 1 beta, 1 beta' and 1 omega subunit. When a sigma factor is associated with the core the holoenzyme is formed, which can initiate transcription. Mg(2+) is required as a cofactor. It depends on Zn(2+) as a cofactor.

It catalyses the reaction RNA(n) + a ribonucleoside 5'-triphosphate = RNA(n+1) + diphosphate. Functionally, DNA-dependent RNA polymerase catalyzes the transcription of DNA into RNA using the four ribonucleoside triphosphates as substrates. The chain is DNA-directed RNA polymerase subunit beta' from Streptococcus pneumoniae (strain ATCC 700669 / Spain 23F-1).